The chain runs to 238 residues: MNKNIIIKSIAALTILTSVTGVGTTMVEGIQQTAKAEHNVKLIKNTNVAPYNGIVSIGSGTGFIVGKNTIVTNKHVVAGMEIGAQIIAHPNGEYNNGGFYKVKKIVRYAGQEDIAILHVEDKAIHPKNRNFKDYTGILKIASEAKENERISIVGYPEPYINKFQMYESTGKVLSVKGNMIISDAFVEPGNSGSAVFNSKYEVVGVHFGGNGPANKSTKGYGVYFSPEIKKFIADNLIK.

A signal peptide spans 1–36; the sequence is MNKNIIIKSIAALTILTSVTGVGTTMVEGIQQTAKA. Active-site charge relay system residues include His75, Asp113, and Ser191.

Belongs to the peptidase S1B family.

Its subcellular location is the secreted. The chain is Serine protease SplE (splE) from Staphylococcus aureus.